The following is a 105-amino-acid chain: Phosphoribosyl-ATP pyrophosphatase (105 aa).

It belongs to the PRA-PH family.

It localises to the cytoplasm. The catalysed reaction is 1-(5-phospho-beta-D-ribosyl)-ATP + H2O = 1-(5-phospho-beta-D-ribosyl)-5'-AMP + diphosphate + H(+). It functions in the pathway amino-acid biosynthesis; L-histidine biosynthesis; L-histidine from 5-phospho-alpha-D-ribose 1-diphosphate: step 2/9. In Ruegeria sp. (strain TM1040) (Silicibacter sp.), this protein is Phosphoribosyl-ATP pyrophosphatase.